Here is a 465-residue protein sequence, read N- to C-terminus: MEKLSNGVRDHCLISDYVSPSAPAPLKQPFVIGVAGGTASGKTTVCNMIMSQLHDQRVVLVNQDSFYHSLTKEKLNKVHEYNFDHPDAFNTEVLLSCMEKLRSGQPVNIPSYDFKIHQSIESSSPVNPGDVIILEGILVLNDPRVRDLMNMKIFVDTDADVRLSRRIQRDTVERGRNIQNVLEQYTKFVKPSFDEYIQPSMKYADIIIPRGGDNDVAIDLIVQHIRTKLCQHNLCKIYSNIFIISSTFQIKGMHTLIRDINTTKHDFVFYADRLIRLVVEHGLGHLPFTEKQITTPTGSVYTGVDFCKRLCGVSVIRSGESMENALRACCNGIKIGKILIHRENNDGRQLIYEKLPKDISSRHVFLLDPVLASGYSAVKAITLLLSKGVPESHIIFLNLIAAPQGIHALCKKFPMLKIVTSEIDSSLNEDSRVIPGLGEFADRYFGTNNINSKVSSLSTNLKLRS.

The tract at residues Leu26–Cys230 is uridine kinase. The uracil phosphoribosyltransferase stretch occupies residues Asn240–Ser465. GTP-binding positions include Lys264, Arg273, and Cys307–Leu310. 5-phospho-alpha-D-ribose 1-diphosphate is bound by residues Arg317 and Arg342. Residue Arg362 coordinates GTP. 5-phospho-alpha-D-ribose 1-diphosphate contacts are provided by residues Asp368, Ser373–Ser376, and Glu439. Residue Gly438–Phe440 participates in uracil binding.

It in the N-terminal section; belongs to the uridine kinase family. The protein in the C-terminal section; belongs to the UPRTase family. It depends on Mg(2+) as a cofactor.

The catalysed reaction is UMP + diphosphate = 5-phospho-alpha-D-ribose 1-diphosphate + uracil. It catalyses the reaction cytidine + ATP = CMP + ADP + H(+). The enzyme catalyses uridine + ATP = UMP + ADP + H(+). The protein operates within pyrimidine metabolism; UMP biosynthesis via salvage pathway; UMP from uracil: step 1/1. Its pathway is pyrimidine metabolism; CTP biosynthesis via salvage pathway; CTP from cytidine: step 1/3. It functions in the pathway pyrimidine metabolism; UMP biosynthesis via salvage pathway; UMP from uridine: step 1/1. Its activity is regulated as follows. Allosterically activated by GTP. In terms of biological role, involved in the pyrimidine salvage pathway. The sequence is that of Uridine kinase-like protein 5 (UKL5) from Arabidopsis thaliana (Mouse-ear cress).